The sequence spans 946 residues: Multiple C2 and transmembrane domain-containing protein 1 (946 aa).

Disordered stretches follow at residues Gln-28–Ser-193 and Leu-205–Glu-229. A compositionally biased stretch (gly residues) spans Val-31 to Gly-43. Residues Phe-87–Cys-96 show a composition bias toward polar residues. A compositionally biased stretch (low complexity) spans Pro-143–Ser-163. Residues Arg-169 to Leu-187 are compositionally biased toward basic and acidic residues. 3 C2 domains span residues Lys-235–Leu-353, Gln-399–Leu-516, and His-550–Leu-671. Asp-270, Asp-276, Asp-323, Asp-325, Asp-331, Asp-433, Asp-439, Asp-486, Asp-488, Asp-494, Asp-589, Asp-595, Asp-641, Asp-643, and Asp-649 together coordinate Ca(2+). Transmembrane regions (helical) follow at residues Phe-758 to Leu-778 and Pro-861 to Ile-881.

Belongs to the MCTP family. It depends on Ca(2+) as a cofactor. As to expression, expressed in the brain and central nervous system (at protein level). Isoform 1 and isoform 2 are expressed in the brain, kidney, liver, heart, lung, skeletal muscle, testis and spleen. Isoform 2 shows a higher expression in the brain, heart and skeletal muscle.

It localises to the cytoplasmic vesicle. The protein localises to the secretory vesicle. It is found in the synaptic vesicle membrane. Its subcellular location is the recycling endosome. The protein resides in the endoplasmic reticulum membrane. Its function is as follows. Calcium sensor which is essential for the stabilization of normal baseline neurotransmitter release and for the induction and long-term maintenance of presynaptic homeostatic plasticity. Overexpression in cultured neurons significantly inhibits neuronal transferrin endocytosis, secretory vesicle retrieval, cell migration, and oxidative stress from glutamate toxicity. The protein is Multiple C2 and transmembrane domain-containing protein 1 of Rattus norvegicus (Rat).